The chain runs to 87 residues: Small ribosomal subunit protein uS15 (87 aa).

The protein belongs to the universal ribosomal protein uS15 family. Part of the 30S ribosomal subunit. Forms a bridge to the 50S subunit in the 70S ribosome, contacting the 23S rRNA.

One of the primary rRNA binding proteins, it binds directly to 16S rRNA where it helps nucleate assembly of the platform of the 30S subunit by binding and bridging several RNA helices of the 16S rRNA. Functionally, forms an intersubunit bridge (bridge B4) with the 23S rRNA of the 50S subunit in the ribosome. The polypeptide is Small ribosomal subunit protein uS15 (Alkaliphilus metalliredigens (strain QYMF)).